The sequence spans 1529 residues: Ras guanine nucleotide exchange factor B (1529 aa).

A coiled-coil region spans residues 135-186 (ISNIEKQLSNLVNLKSNTTEQTDRKYKTNLIDFKESIIQLEKDCKNLLKQSN). 5 disordered regions span residues 290–357 (INTL…ISIN), 576–600 (TTTTTTTTTTTNTTTNPSNTIKSSH), 680–724 (KRNT…HIQQ), 847–948 (MGKE…NHNR), and 1168–1206 (QPPQITTQSTQPIQNSTTQPQPQPQPQQPQPQLQQSTNL). Low complexity-rich tracts occupy residues 576 to 591 (TTTTTTTTTTTNTTTN), 683 to 724 (TSSG…HIQQ), and 853 to 887 (NSNTNNANNPNNNNNNNNNNNNNNNNNNNNNNNNE). Coiled coils occupy residues 722-798 (IQQI…LNRK) and 871-898 (NNNNNNNNNNNNNNNNENKNENKNETNK). A compositionally biased stretch (basic and acidic residues) spans 888 to 898 (NKNENKNETNK). Low complexity-rich tracts occupy residues 906-916 (SSTSTLSSSTT), 924-940 (SSTNSPNSSTPNLLLPP), 1168-1187 (QPPQITTQSTQPIQNSTTQP), and 1197-1206 (QPQLQQSTNL). In terms of domain architecture, N-terminal Ras-GEF spans 1075–1205 (FYRSIKYASL…PQPQLQQSTN (131 aa)). Positions 1282–1517 (SSTDIAEQLT…YEQSILLEPK (236 aa)) constitute a Ras-GEF domain.

It is found in the cytoplasm. Promotes the exchange of Ras-bound GDP by GTP. Involved in phagocytosis, fluid-phase endocytosis, regulation of macropinocytosis and control of cell movement. The protein is Ras guanine nucleotide exchange factor B (gefB) of Dictyostelium discoideum (Social amoeba).